Consider the following 193-residue polypeptide: Holliday junction branch migration complex subunit RuvA (193 aa).

Residues 1 to 64 (MITSLTGTIL…EDAHLLYGFM (64 aa)) form a domain I region. Residues 65-139 (TVAERDMFRL…DKMGGIAPGP (75 aa)) form a domain II region. A flexible linker region spans residues 139-143 (PMGRG). Residues 144–193 (GAGDPRQEAIAALLTLGYKPAQASQAIAGLADGLGLEDLIRQSLQNLSRH) are domain III.

It belongs to the RuvA family. As to quaternary structure, homotetramer. Forms an RuvA(8)-RuvB(12)-Holliday junction (HJ) complex. HJ DNA is sandwiched between 2 RuvA tetramers; dsDNA enters through RuvA and exits via RuvB. An RuvB hexamer assembles on each DNA strand where it exits the tetramer. Each RuvB hexamer is contacted by two RuvA subunits (via domain III) on 2 adjacent RuvB subunits; this complex drives branch migration. In the full resolvosome a probable DNA-RuvA(4)-RuvB(12)-RuvC(2) complex forms which resolves the HJ.

It is found in the cytoplasm. The RuvA-RuvB-RuvC complex processes Holliday junction (HJ) DNA during genetic recombination and DNA repair, while the RuvA-RuvB complex plays an important role in the rescue of blocked DNA replication forks via replication fork reversal (RFR). RuvA specifically binds to HJ cruciform DNA, conferring on it an open structure. The RuvB hexamer acts as an ATP-dependent pump, pulling dsDNA into and through the RuvAB complex. HJ branch migration allows RuvC to scan DNA until it finds its consensus sequence, where it cleaves and resolves the cruciform DNA. The protein is Holliday junction branch migration complex subunit RuvA of Acidithiobacillus ferrooxidans (strain ATCC 53993 / BNL-5-31) (Leptospirillum ferrooxidans (ATCC 53993)).